Consider the following 469-residue polypeptide: Mitochondrial adenyl nucleotide antiporter SLC25A25 (469 aa).

Residues methionine 1–aspartate 165 are regulatory N-terminal domain. Residues methionine 1–histidine 189 are Mitochondrial intermembrane-facing. EF-hand domains lie at threonine 47–glutamate 80, aspartate 78–lysine 113, and isoleucine 114–glutamate 149. Positions 60, 62, 64, 66, and 71 each coordinate Ca(2+). Residues isoleucine 151–histidine 160 are linker region. The C-terminal transmembrane transporter domain stretch occupies residues valine 166 to arginine 469. 3 Solcar repeats span residues glycine 184–leucine 270, leucine 278–threonine 363, and proline 375–threonine 463. Residues leucine 190 to leucine 207 traverse the membrane as a helical segment. Topologically, residues aspartate 208–arginine 244 are mitochondrial matrix. Residues glycine 245–tyrosine 264 form a helical membrane-spanning segment. Over glutamate 265–glycine 287 the chain is Mitochondrial intermembrane. Residues serine 288 to methionine 301 form a helical membrane-spanning segment. The Mitochondrial matrix segment spans residues glutamate 302 to lysine 337. The chain crosses the membrane as a helical span at residues glycine 338–tyrosine 357. Residues glutamate 358–leucine 380 are Mitochondrial intermembrane-facing. The helical transmembrane segment at leucine 381–leucine 398 threads the bilayer. The Mitochondrial matrix portion of the chain corresponds to alanine 399 to arginine 437. The helical transmembrane segment at glycine 438–tyrosine 457 threads the bilayer. Over glutamate 458–arginine 469 the chain is Mitochondrial intermembrane.

Belongs to the mitochondrial carrier (TC 2.A.29) family. In terms of tissue distribution, mainly present in the liver and the skeletal muscle (at protein level).

Its subcellular location is the mitochondrion inner membrane. It catalyses the reaction Mg(2+)(out) + phosphate(in) + ATP(out) = Mg(2+)(in) + phosphate(out) + ATP(in). Its activity is regulated as follows. Activated by an increase in cytosolic calcium levels that induce a conformational change of the N-terminal regulatory domain, uncapping the channel and allowing transport. In terms of biological role, electroneutral antiporter that most probably mediates the transport of adenyl nucleotides through the inner mitochondrial membrane. Originally identified as an ATP-magnesium/inorganic phosphate antiporter, it could have a broader specificity for adenyl nucleotides. By regulating the mitochondrial matrix adenyl nucleotide pool could adapt to changing cellular energetic demands and indirectly regulate adenyl nucleotide-dependent metabolic pathways. This Rattus norvegicus (Rat) protein is Mitochondrial adenyl nucleotide antiporter SLC25A25.